We begin with the raw amino-acid sequence, 177 residues long: Large ribosomal subunit protein uL6 (177 aa).

A disordered region spans residues 154-177 (PEPYKGKGVRYADEQVRRKEAKKK). Positions 155–171 (EPYKGKGVRYADEQVRR) are enriched in basic and acidic residues.

Belongs to the universal ribosomal protein uL6 family. In terms of assembly, part of the 50S ribosomal subunit.

Its function is as follows. This protein binds to the 23S rRNA, and is important in its secondary structure. It is located near the subunit interface in the base of the L7/L12 stalk, and near the tRNA binding site of the peptidyltransferase center. The chain is Large ribosomal subunit protein uL6 from Alcanivorax borkumensis (strain ATCC 700651 / DSM 11573 / NCIMB 13689 / SK2).